We begin with the raw amino-acid sequence, 317 residues long: D-alanine--D-alanine ligase (317 aa).

Residues 111–308 enclose the ATP-grasp domain; sequence KRFWNGIGIP…YASLVEKIAQ (198 aa). 137 to 192 contributes to the ATP binding site; the sequence is EEQMSYPVIVKPSREGSTIGINKAMNRAELDDALIKALEYDSDILVEEFIDGPEFT. Mg(2+)-binding residues include D262, E275, and N277.

The protein belongs to the D-alanine--D-alanine ligase family. Requires Mg(2+) as cofactor. Mn(2+) serves as cofactor.

It is found in the cytoplasm. It carries out the reaction 2 D-alanine + ATP = D-alanyl-D-alanine + ADP + phosphate + H(+). It participates in cell wall biogenesis; peptidoglycan biosynthesis. In terms of biological role, cell wall formation. The polypeptide is D-alanine--D-alanine ligase (Marinomonas sp. (strain MWYL1)).